Reading from the N-terminus, the 1133-residue chain is Protein TOPLESS-RELATED PROTEIN 2 (1133 aa).

One can recognise a LisH domain in the interval 4–36 (LSRELVFLILQFLDEEKFKETVHKLEQESAFYF). Residues 34-92 (FYFNMKHFEDLVQGGEWDEVEKYLSGFTKVEDNRYSMKIFFEIRKQKYLEALDRHDRAK) enclose the CTLH domain. 12 WD repeats span residues 344–384 (NQGS…RIAH), 451–492 (AHIG…KQYT), 495–536 (GHEA…SRVD), 539–582 (APGH…IKRT), 586–625 (FRKRSLGVVQFDTTRNRFLAAGDEFVVKFWDMDNTNILTT), 630–669 (GGLPASPRLRFNREGSLLAVTANENGIKILANTDGQRLLR), 771–810 (ATSSKVVRLLYTNNGVALLALGSNAVHKLWKWQRTDRNPN), 838–876 (NPEEATACIALSKNDSYVMSASGGKVSLFNMMTFKVMTT), 879–919 (APPP…VKSK), 922–961 (GHSKKITGLAFSQSMNMLVSSGADAQLCAWSIDGWEKKKS), 970–1011 (RSGA…RSWS), and 1015–1054 (ALPAPISSAIYSCDGLLIYAGFCDGAIGVFEAESLRLRCR). Positions 1102 to 1133 (DSDPKWGVAPPQDNGTHPTISAAPAAANKPEV) are disordered.

In terms of assembly, tetramer. Interacts with D53, probably via the EAR motifs. Binds to AP2-1/TOE1, AP2-3/SNB and AP2-2/IDS1. Interacts with WOX1. Interacts with MOF1. Expressed in stems and panicles. Detected in roots, seeds, leaves and sheath. Expressed in the meristem and lateral organ primordia.

It localises to the nucleus. Functionally, transcriptional corepressor involved in branch formation regulation, presumably by suppressing primary branch formation and promoting secondary branch formation. Required for the cell elongation in the first internode and pollen development. Probable downstream regulator of strigolactones signaling important in axillary meristem maintenance. Acts in auxin signaling and is associated with the regulation of histone deacetylation. Essential for the function of miR172 microRNA and its target genes in regulating panicle development. The sequence is that of Protein TOPLESS-RELATED PROTEIN 2 from Oryza sativa subsp. japonica (Rice).